Consider the following 204-residue polypeptide: MSFTVDDRVLALAGIAQALQQVRRIADTGHSDAAAVRTAVESVFRVDASSPQEVFGDRHALKAGLRLLHNYFRSQGQDPILPKLALSVLQLERRFVQEGETVNKVASGIERAQRQAAELGDSGHPDVLANLGGLYADTISHLKPRVMVQGNPHYLGQAGVVAEIRALLLAAVRSAVLWRQLGGSYWDFLFSRKAMIEAVDRQLA.

It belongs to the HflD family.

Its subcellular location is the cytoplasm. It localises to the cell inner membrane. The polypeptide is High frequency lysogenization protein HflD homolog (Stenotrophomonas maltophilia (strain R551-3)).